The sequence spans 364 residues: BTB/POZ and TAZ domain-containing protein 2 (364 aa).

The BTB domain occupies 34–106 (SDVEIVTSDN…LYSSSLTEDE (73 aa)). The short motif at 203-212 (RKKRRRRHRK) is the Nuclear localization signal element. Residues 215-316 (DLYMQLSEAM…PDSCRVPLCR (102 aa)) form a TAZ-type zinc finger. The segment at 327–350 (KMGEDTKWKLLVTRVVSAKAMTSL) is caM-binding.

As to quaternary structure, interacts with CUL3A. Interacts with GTE11/BET10 through the BTB domain. As to expression, preferentially expressed in young leaves and roots.

The protein resides in the nucleus. It is found in the cytoplasm. Its pathway is protein modification; protein ubiquitination. Its function is as follows. May act as a substrate-specific adapter of an E3 ubiquitin-protein ligase complex (CUL3-RBX1-BTB) which mediates the ubiquitination and subsequent proteasomal degradation of target proteins. Plays a key role as a component of the TAC1-mediated telomerase activation pathway certainly by targeting a telomerase repressor to degradation. Seems to occupy an integral position in a complex signaling network that perceives, integrates, and responds to multiple, and sometimes competing, signals. Enhances responses to auxin in postgermination and vegetative development. Also negatively regulates ABA- and sugar-mediated inhibition of the germination. Essential for female and male gametophyte development. This is BTB/POZ and TAZ domain-containing protein 2 (BT2) from Arabidopsis thaliana (Mouse-ear cress).